The sequence spans 118 residues: Large ribosomal subunit protein uL18 (118 aa).

Residues 1–22 (MISKPDKNKLRQKRHRRVRGKL) form a disordered region. The segment covering 10–20 (LRQKRHRRVRG) has biased composition (basic residues).

This sequence belongs to the universal ribosomal protein uL18 family. In terms of assembly, part of the 50S ribosomal subunit; part of the 5S rRNA/L5/L18/L25 subcomplex. Contacts the 5S and 23S rRNAs.

Functionally, this is one of the proteins that bind and probably mediate the attachment of the 5S RNA into the large ribosomal subunit, where it forms part of the central protuberance. In Streptococcus thermophilus (strain ATCC BAA-491 / LMD-9), this protein is Large ribosomal subunit protein uL18.